The following is a 358-amino-acid chain: Nicotinate-nucleotide--dimethylbenzimidazole phosphoribosyltransferase (358 aa).

Glu-314 functions as the Proton acceptor in the catalytic mechanism.

The protein belongs to the CobT family.

The enzyme catalyses 5,6-dimethylbenzimidazole + nicotinate beta-D-ribonucleotide = alpha-ribazole 5'-phosphate + nicotinate + H(+). Its pathway is nucleoside biosynthesis; alpha-ribazole biosynthesis; alpha-ribazole from 5,6-dimethylbenzimidazole: step 1/2. In terms of biological role, catalyzes the synthesis of alpha-ribazole-5'-phosphate from nicotinate mononucleotide (NAMN) and 5,6-dimethylbenzimidazole (DMB). This chain is Nicotinate-nucleotide--dimethylbenzimidazole phosphoribosyltransferase, found in Mycobacterium marinum (strain ATCC BAA-535 / M).